Consider the following 107-residue polypeptide: MSITLSDTAAARVNAFLANRGKGFGLRLGVRTSGCSGMAYVLEFVDAPQPEDTVFEDKGVKVVVDGKSLQFLNGTQLDFVKEGLNEGFKFTNPNVKDECGCGESFNV.

Positions 35, 99, and 101 each coordinate Fe cation.

It belongs to the HesB/IscA family. As to quaternary structure, homodimer; may form tetramers and higher multimers. The cofactor is Fe cation.

In terms of biological role, is able to transfer iron-sulfur clusters to apo-ferredoxin. Multiple cycles of [2Fe2S] cluster formation and transfer are observed, suggesting that IscA acts catalytically. Recruits intracellular free iron so as to provide iron for the assembly of transient iron-sulfur cluster in IscU in the presence of IscS, L-cysteine and the thioredoxin reductase system TrxA/TrxB. This is Iron-binding protein IscA from Cronobacter sakazakii (strain ATCC BAA-894) (Enterobacter sakazakii).